A 2340-amino-acid polypeptide reads, in one-letter code: Protein pad-1 (2340 aa).

2 disordered regions span residues 411–458 and 1910–1959; these read KLIK…EPSI and TRNS…RRDP. Basic and acidic residues predominate over residues 415 to 432; it reads KRPDSKPPRKPGDREGLH. Over residues 437–448 the composition is skewed to polar residues; it reads SLHSGVSGNSED. Over residues 1922-1934 the composition is skewed to low complexity; that stretch reads GGSITSGSTSTTT.

It belongs to the DOP1 family.

In terms of biological role, essential for cell patterning during gastrulation. May be involved in protein traffic between late Golgi and early endosomes. The chain is Protein pad-1 (pad-1) from Caenorhabditis briggsae.